The sequence spans 145 residues: MIIDITEIMDLIPHRYPFLLVDRVLEIDLNKSILGIKNVTVNEPQFTGHFPTRPVMPGVLMVEAMAQIAAILVAKSLGSTKNKDVFLMAIENAKFRRIVQPGDTMHIHAVIDQQRTNVWKFSSTVTVEGEMAAESKFTAMIKDKS.

His-49 is an active-site residue.

The protein belongs to the thioester dehydratase family. FabZ subfamily.

Its subcellular location is the cytoplasm. The catalysed reaction is a (3R)-hydroxyacyl-[ACP] = a (2E)-enoyl-[ACP] + H2O. Functionally, involved in unsaturated fatty acids biosynthesis. Catalyzes the dehydration of short chain beta-hydroxyacyl-ACPs and long chain saturated and unsaturated beta-hydroxyacyl-ACPs. The protein is 3-hydroxyacyl-[acyl-carrier-protein] dehydratase FabZ of Rickettsia akari (strain Hartford).